We begin with the raw amino-acid sequence, 1527 residues long: Lysophospholipase nte1 (1527 aa).

Over Met1–Gly69 the chain is Cytoplasmic. The helical transmembrane segment at Trp70–Ile90 threads the bilayer. Residues Thr91–Thr112 are Lumenal-facing. The chain crosses the membrane as a helical span at residues Met113–Ile133. Over Arg134–Ile1527 the chain is Cytoplasmic. 4 disordered regions span residues Ala240–Val259, Leu299–Ile387, Glu576–Arg596, and Ala750–Ser785. Residues His355–Thr373 show a composition bias toward basic and acidic residues. A nucleoside 3',5'-cyclic phosphate contacts are provided by residues Gly685–Val804 and Arg846–Arg966. Residues Arg761 to Ser771 are compositionally biased toward low complexity. One can recognise a PNPLA domain in the interval Leu1224–Lys1388. Positions Gly1228–Gly1233 match the GXGXXG motif. Positions Gly1255 to Gly1259 match the GXSXG motif. The active-site Nucleophile is Ser1257. Asp1375 (proton acceptor) is an active-site residue. A DGA/G motif is present at residues Asp1375–Gly1377.

Belongs to the NTE family.

The protein localises to the endoplasmic reticulum membrane. The catalysed reaction is a 1-acyl-sn-glycero-3-phosphocholine + H2O = sn-glycerol 3-phosphocholine + a fatty acid + H(+). Its activity is regulated as follows. Inhibited by organophosphorus esters. Its function is as follows. Intracellular phospholipase B that catalyzes the double deacylation of phosphatidylcholine (PC) to glycerophosphocholine (GroPCho). Plays an important role in membrane lipid homeostasis. Responsible for the rapid PC turnover in response to inositol, elevated temperatures, or when choline is present in the growth medium. In Aspergillus terreus (strain NIH 2624 / FGSC A1156), this protein is Lysophospholipase nte1 (nte1).